A 358-amino-acid polypeptide reads, in one-letter code: Probable D-xylulose reductase A (358 aa).

The Zn(2+) site is built by cysteine 47, histidine 72, and glutamate 73. 182-187 (GAGPVG) serves as a coordination point for NAD(+).

The protein belongs to the zinc-containing alcohol dehydrogenase family. Requires Zn(2+) as cofactor.

It catalyses the reaction xylitol + NAD(+) = D-xylulose + NADH + H(+). Its pathway is carbohydrate degradation; L-arabinose degradation via L-arabinitol; D-xylulose 5-phosphate from L-arabinose (fungal route): step 4/5. Xylitol dehydrogenase which catalyzes the conversion of xylitol to D-xylulose. Xylose is a major component of hemicelluloses such as xylan. Most fungi utilize D-xylose via three enzymatic reactions, xylose reductase (XR), xylitol dehydrogenase (XDH), and xylulokinase, to form xylulose 5-phosphate, which enters pentose phosphate pathway. This is Probable D-xylulose reductase A (xdhA) from Neosartorya fischeri (strain ATCC 1020 / DSM 3700 / CBS 544.65 / FGSC A1164 / JCM 1740 / NRRL 181 / WB 181) (Aspergillus fischerianus).